A 174-amino-acid polypeptide reads, in one-letter code: MAPTGQAVDVAVREGAGDVGYSVERENLPADDPVRNGNRWRVIAVDTEHHRIAARRLGDGARAAFSGDYLHEHITHGYAITVHASQGTTAHSTHAVLGDNTSRATLYVAMTPARESNTAYLCERTAGEGARVDLAGWDLWVSGKAEAMSDEKSASPVWCRVGARCDHRGKRSCW.

This is an uncharacterized protein from Mycobacterium tuberculosis (strain CDC 1551 / Oshkosh).